The primary structure comprises 121 residues: Small ribosomal subunit protein bS16 (121 aa).

A disordered region spans residues Ala-80 to Glu-121. Composition is skewed to basic and acidic residues over residues Gly-81–Asn-90 and Lys-99–Lys-110.

This sequence belongs to the bacterial ribosomal protein bS16 family.

This Ruegeria sp. (strain TM1040) (Silicibacter sp.) protein is Small ribosomal subunit protein bS16.